The sequence spans 326 residues: DNA polymerase III subunit delta' (326 aa).

DNA polymerase III contains a core (composed of alpha, epsilon and theta chains) that associates with a tau subunit. This core dimerizes to form the POLIII' complex. PolIII' associates with the gamma complex (composed of gamma, delta, delta', psi and chi chains) and with the beta chain to form the complete DNA polymerase III complex.

It carries out the reaction DNA(n) + a 2'-deoxyribonucleoside 5'-triphosphate = DNA(n+1) + diphosphate. Functionally, DNA polymerase III is a complex, multichain enzyme responsible for most of the replicative synthesis in bacteria. This DNA polymerase also exhibits 3' to 5' exonuclease activity. The sequence is that of DNA polymerase III subunit delta' (holB) from Buchnera aphidicola subsp. Acyrthosiphon pisum (strain APS) (Acyrthosiphon pisum symbiotic bacterium).